The following is an 80-amino-acid chain: Serine palmitoyltransferase-regulating protein TSC3 (80 aa).

The chain crosses the membrane as a helical span at residues 54 to 74 (FDSFFLHVFFLTIFSLSFFGI).

As to quaternary structure, interacts with the serine palmitoyltransferase complex LCB1-LCB2. Component of the SPOTS complex, at least composed of LCB1/2 (LCB1 and/or LCB2), ORM1/2 (ORM1 and/or ORM2), SAC1 and TSC3.

Its subcellular location is the endoplasmic reticulum membrane. Stimulates the activity of serine palmitoyltransferase (SPT), and thus plays a role in the biosynthesis of sphingolipids. The sequence is that of Serine palmitoyltransferase-regulating protein TSC3 (TSC3) from Saccharomyces cerevisiae (strain ATCC 204508 / S288c) (Baker's yeast).